The chain runs to 717 residues: Fatty acid oxidation complex subunit alpha (717 aa).

Residues 1 to 190 (MIHAGNAITV…KDGAVDAVVA (190 aa)) form an enoyl-CoA hydratase/isomerase region. Aspartate 298 provides a ligand contact to substrate. A 3-hydroxyacyl-CoA dehydrogenase region spans residues 313–717 (HPVNQAAVLG…MAANNKKFYG (405 aa)). Residues methionine 326, aspartate 345, 402–404 (VTE), lysine 409, and serine 431 each bind NAD(+). Histidine 452 functions as the For 3-hydroxyacyl-CoA dehydrogenase activity in the catalytic mechanism. Asparagine 455 is a binding site for NAD(+). Asparagine 502 is a binding site for substrate.

In the N-terminal section; belongs to the enoyl-CoA hydratase/isomerase family. It in the C-terminal section; belongs to the 3-hydroxyacyl-CoA dehydrogenase family. As to quaternary structure, heterotetramer of two alpha chains (FadB) and two beta chains (FadA).

It catalyses the reaction a (3S)-3-hydroxyacyl-CoA + NAD(+) = a 3-oxoacyl-CoA + NADH + H(+). The enzyme catalyses a (3S)-3-hydroxyacyl-CoA = a (2E)-enoyl-CoA + H2O. The catalysed reaction is a 4-saturated-(3S)-3-hydroxyacyl-CoA = a (3E)-enoyl-CoA + H2O. It carries out the reaction (3S)-3-hydroxybutanoyl-CoA = (3R)-3-hydroxybutanoyl-CoA. It catalyses the reaction a (3Z)-enoyl-CoA = a 4-saturated (2E)-enoyl-CoA. The enzyme catalyses a (3E)-enoyl-CoA = a 4-saturated (2E)-enoyl-CoA. It functions in the pathway lipid metabolism; fatty acid beta-oxidation. In terms of biological role, involved in the aerobic and anaerobic degradation of long-chain fatty acids via beta-oxidation cycle. Catalyzes the formation of 3-oxoacyl-CoA from enoyl-CoA via L-3-hydroxyacyl-CoA. It can also use D-3-hydroxyacyl-CoA and cis-3-enoyl-CoA as substrate. The protein is Fatty acid oxidation complex subunit alpha of Acinetobacter baumannii (strain AB307-0294).